Here is a 683-residue protein sequence, read N- to C-terminus: DNA ligase (683 aa).

Residues 36–40 (DAEYD), 85–86 (SL), and E119 contribute to the NAD(+) site. Residue K121 is the N6-AMP-lysine intermediate of the active site. Residues R142, E179, K295, and K319 each contribute to the NAD(+) site. Zn(2+) is bound by residues C413, C416, C431, and C437. Positions 596-683 (TETLPLSGQT…EHQAHLGGEA (88 aa)) constitute a BRCT domain.

This sequence belongs to the NAD-dependent DNA ligase family. LigA subfamily. It depends on Mg(2+) as a cofactor. The cofactor is Mn(2+).

The enzyme catalyses NAD(+) + (deoxyribonucleotide)n-3'-hydroxyl + 5'-phospho-(deoxyribonucleotide)m = (deoxyribonucleotide)n+m + AMP + beta-nicotinamide D-nucleotide.. DNA ligase that catalyzes the formation of phosphodiester linkages between 5'-phosphoryl and 3'-hydroxyl groups in double-stranded DNA using NAD as a coenzyme and as the energy source for the reaction. It is essential for DNA replication and repair of damaged DNA. In Hahella chejuensis (strain KCTC 2396), this protein is DNA ligase.